The chain runs to 467 residues: Neurexin-1-beta (467 aa).

The first 45 residues, 1-45 (MYQRMLRCGAELGSPGGGGGGAGGRLALLWIVPLTLSGLLGVAWG), serve as a signal peptide directing secretion. Residues 46-391 (ASSLGAHHIH…EVIRESSSTT (346 aa)) are Extracellular-facing. The Laminin G-like domain occupies 86-284 (YIFSKGGGQI…DANIAIVGNV (199 aa)). Asp136 and Val153 together coordinate Ca(2+). Asn183 carries N-linked (GlcNAc...) asparagine glycosylation. The interval 200–229 (GNNDNERLAIARQRIPYRLGRVVDEWLLDK) is essential for interaction with CBLN1; modulates interaction affinity with NLGN1, NLGN2 and NLGN3; prevents interaction with DAG1/alpha-dystroglycan; modulates interaction with alpha-latrotoxin. The Ca(2+) site is built by Ile235 and Asn237. A disordered region spans residues 318–380 (LATSTARRGN…AGGREPYPGS (63 aa)). Residues 324–339 (RRGNSPTKEPVSQTTD) show a composition bias toward polar residues. Ser345 carries an O-linked (Xyl...) (heparan sulfate) serine glycan. Residues 392-412 (GMVVGIVAAAALCILILLYAM) traverse the membrane as a helical segment. The Cytoplasmic segment spans residues 413–467 (YKYRNRDEGSYHVDESRNYISNSAQSNGAVVKEKQPSSAKSANKNKKNKDKEYYV). Positions 434–467 (NSAQSNGAVVKEKQPSSAKSANKNKKNKDKEYYV) are disordered. Ser449, Ser450, and Ser453 each carry phosphoserine.

Belongs to the neurexin family. As to quaternary structure, the cytoplasmic C-terminal region binds to CASK. Binds NLGN1, NLGN2 and NLGN3, DAG1 (alpha-dystroglycan) and alpha-latrotoxin. Binding to neuroligins is calcium-dependent, and the binding preference ranks as follow: NLGN1 &gt; NLGN4 &gt;&gt; NLGN3 &gt; NLGN2. Interacts with CBLN2 and more weakly with CBLN4. Interacts with CBLN1; interaction is CBLN1 hexamer form-dependent; CBLN1-binding is calcium-independent; isoform 1b does not interact with CBLN1. Interacts with CLSTN3. In terms of processing, O-glycosylated; contains heparan sulfate. Heparan sulfate attachment is required for synapse development by mediating interactions with neuroligins.

It is found in the presynaptic cell membrane. Functionally, neuronal cell surface protein involved in cell recognition and cell adhesion by forming intracellular junctions through binding to neuroligins. Plays a role in formation of synaptic junctions. Functions as part of a trans-synaptic complex by binding to cerebellins and postsynaptic GRID1. This interaction helps regulate the activity of NMDA and AMPA receptors at hippocampal synapses without affecting synapse formation. NRXN1B-CBLN2-GRID1 complex transduce presynaptic signals into postsynaptic NMDAR response. This chain is Neurexin-1-beta, found in Bos taurus (Bovine).